A 497-amino-acid chain; its full sequence is Serine hydroxymethyltransferase (497 aa).

(6S)-5,6,7,8-tetrahydrofolate-binding positions include leucine 176 and 180 to 182; that span reads GHL. N6-(pyridoxal phosphate)lysine is present on lysine 289.

Belongs to the SHMT family. As to quaternary structure, homodimer. The cofactor is pyridoxal 5'-phosphate.

The protein resides in the cytoplasm. The catalysed reaction is (6R)-5,10-methylene-5,6,7,8-tetrahydrofolate + glycine + H2O = (6S)-5,6,7,8-tetrahydrofolate + L-serine. The protein operates within one-carbon metabolism; tetrahydrofolate interconversion. Its pathway is amino-acid biosynthesis; glycine biosynthesis; glycine from L-serine: step 1/1. Catalyzes the reversible interconversion of serine and glycine with tetrahydrofolate (THF) serving as the one-carbon carrier. This reaction serves as the major source of one-carbon groups required for the biosynthesis of purines, thymidylate, methionine, and other important biomolecules. Also exhibits THF-independent aldolase activity toward beta-hydroxyamino acids, producing glycine and aldehydes, via a retro-aldol mechanism. The chain is Serine hydroxymethyltransferase from Chlamydia felis (strain Fe/C-56) (Chlamydophila felis).